Reading from the N-terminus, the 384-residue chain is Formate-dependent phosphoribosylglycinamide formyltransferase (384 aa).

Residues 14–15 and Glu74 each bind N(1)-(5-phospho-beta-D-ribosyl)glycinamide; that span reads EL. Residues Arg106, Lys147, 152–157, 187–190, and Glu195 contribute to the ATP site; these read SSGKGQ and EEFI. Residues 111 to 300 enclose the ATP-grasp domain; it reads RLAAETLGLA…EFALHVRAIL (190 aa). Residues Glu259 and Glu271 each contribute to the Mg(2+) site. N(1)-(5-phospho-beta-D-ribosyl)glycinamide contacts are provided by residues Asp278, Lys348, and 355-356; that span reads RR.

Belongs to the PurK/PurT family. In terms of assembly, homodimer.

The catalysed reaction is N(1)-(5-phospho-beta-D-ribosyl)glycinamide + formate + ATP = N(2)-formyl-N(1)-(5-phospho-beta-D-ribosyl)glycinamide + ADP + phosphate + H(+). Its pathway is purine metabolism; IMP biosynthesis via de novo pathway; N(2)-formyl-N(1)-(5-phospho-D-ribosyl)glycinamide from N(1)-(5-phospho-D-ribosyl)glycinamide (formate route): step 1/1. In terms of biological role, catalyzes two reactions: the first one is the production of beta-formyl glycinamide ribonucleotide (GAR) from formate, ATP and beta GAR; the second, a side reaction, is the production of acetyl phosphate and ADP from acetate and ATP. Functionally, involved in the de novo purine biosynthesis. Catalyzes the transfer of formate to 5-phospho-ribosyl-glycinamide (GAR), producing 5-phospho-ribosyl-N-formylglycinamide (FGAR). Formate is provided by PurU via hydrolysis of 10-formyl-tetrahydrofolate. In Bacillus subtilis (strain 168), this protein is Formate-dependent phosphoribosylglycinamide formyltransferase.